The primary structure comprises 605 residues: MGCCTLGLFADSVEKRAAKDVFTEPARFYPSQKSTLESARSDTSESENASSSVPSHSQQELAPDSAAPARNSVLSPAPPERREKQGTAVHGAEVTRAGAVSPRFVGGLTKILAASDHTFFAAGNDGFLTQYTYPDYKPDTWQITPVSIKHCAVHPDRARIAVYETDGRNYHRVSVWNWRTKEILFAKRFTASVVSLSWIVQGSFLSVGTASREGVTVLDGSGNTVSLFSEEPGVVLLTASGPRLVLSYAESGRLTYVDYSKKTTVKRLLTEKNLLSPMLIHNGAHLVGYRDQRVYVIQSSSGAVLTEYPARSACFAHTFSDSLPVWIEPAELKYHWRIRKAAQRSADFMLPDNARITSACSVRTRVIVGTDRGILYELQQGDDRRVTIRALNGERQIYASDVHGADEGAYFLADGSLYHSMASGGPYRVLVRGVKGTRFLPYRDGFIVWSAGKETEFLHCAQKTSQHRMIYRARSTVSGVSVYGRMLVITEPFSGVSVVDIERGIRVFFHKAIGMQDSLLITDDVIVATQSGLQPLVLLHMRTGETYTQRWEAICLGVRAHDTQHVYFFSLDTNAGTTDLIHFVCNCSNPQKVLCDASSLIRMRI.

The tract at residues 22-93 (FTEPARFYPS…KQGTAVHGAE (72 aa)) is disordered. Low complexity predominate over residues 46–57 (SENASSSVPSHS).

This is an uncharacterized protein from Treponema pallidum (strain Nichols).